The sequence spans 119 residues: Ribonuclease P protein component (119 aa).

Belongs to the RnpA family. Consists of a catalytic RNA component (M1 or rnpB) and a protein subunit.

The catalysed reaction is Endonucleolytic cleavage of RNA, removing 5'-extranucleotides from tRNA precursor.. RNaseP catalyzes the removal of the 5'-leader sequence from pre-tRNA to produce the mature 5'-terminus. It can also cleave other RNA substrates such as 4.5S RNA. The protein component plays an auxiliary but essential role in vivo by binding to the 5'-leader sequence and broadening the substrate specificity of the ribozyme. The polypeptide is Ribonuclease P protein component (Shewanella woodyi (strain ATCC 51908 / MS32)).